The following is a 398-amino-acid chain: Nicotinate phosphoribosyltransferase (398 aa).

H222 bears the Phosphohistidine; by autocatalysis mark.

Belongs to the NAPRTase family. In terms of processing, transiently phosphorylated on a His residue during the reaction cycle. Phosphorylation strongly increases the affinity for substrates and increases the rate of nicotinate D-ribonucleotide production. Dephosphorylation regenerates the low-affinity form of the enzyme, leading to product release.

It catalyses the reaction nicotinate + 5-phospho-alpha-D-ribose 1-diphosphate + ATP + H2O = nicotinate beta-D-ribonucleotide + ADP + phosphate + diphosphate. It participates in cofactor biosynthesis; NAD(+) biosynthesis; nicotinate D-ribonucleotide from nicotinate: step 1/1. Its function is as follows. Catalyzes the synthesis of beta-nicotinate D-ribonucleotide from nicotinate and 5-phospho-D-ribose 1-phosphate at the expense of ATP. The sequence is that of Nicotinate phosphoribosyltransferase from Acidovorax ebreus (strain TPSY) (Diaphorobacter sp. (strain TPSY)).